Here is a 204-residue protein sequence, read N- to C-terminus: INSIG protein homolog (204 aa).

Helical transmembrane passes span 5–27, 47–64, 76–97, 101–118, and 124–145; these read ISEA…HSHV, FWFP…AELR, ARQA…ALVH, VVPV…TWCV, and GAAC…LVQL. Position 26 (His26) interacts with a 1,2-diacyl-sn-glycerol. An a 1,2-diacyl-sn-glycerol-binding site is contributed by Tyr150. Residues 162-179 form a helical membrane-spanning segment; it reads PFLAPLYFAFGVVAALLG.

It belongs to the INSIG family. As to quaternary structure, homotrimer.

The protein resides in the membrane. Its function is as follows. Diacylglycerol-binding protein. The protein is INSIG protein homolog of Mycolicibacterium vanbaalenii (strain DSM 7251 / JCM 13017 / BCRC 16820 / KCTC 9966 / NRRL B-24157 / PYR-1) (Mycobacterium vanbaalenii).